The primary structure comprises 219 residues: Ran-binding protein 1 homolog c (219 aa).

Residues M1–R11 show a composition bias toward basic and acidic residues. Disordered stretches follow at residues M1–I30 and Q160–T219. The span at E12–T23 shows a compositional bias: acidic residues. Residues Q26–V161 form the RanBD1 domain. Basic and acidic residues predominate over residues S185–T219.

The protein localises to the nucleus. It localises to the nuclear pore complex. The chain is Ran-binding protein 1 homolog c (RANBP1C) from Arabidopsis thaliana (Mouse-ear cress).